Reading from the N-terminus, the 883-residue chain is DNA mismatch repair protein MutS (883 aa).

633–640 lines the ATP pocket; that stretch reads GPNMGGKS.

It belongs to the DNA mismatch repair MutS family.

This protein is involved in the repair of mismatches in DNA. It is possible that it carries out the mismatch recognition step. This protein has a weak ATPase activity. This chain is DNA mismatch repair protein MutS, found in Bordetella pertussis (strain Tohama I / ATCC BAA-589 / NCTC 13251).